We begin with the raw amino-acid sequence, 75 residues long: Cytochrome c oxidase assembly factor 5 (75 aa).

Residues 28 to 66 (QHDCVVKEGKKPSECLKEGHCRSMQVAFFECKRSMLDTR) form the CHCH domain. The Cx10C motif signature appears at 31–42 (CVVKEGKKPSEC). Disulfide bonds link C31/C58 and C42/C48. Positions 48-58 (CRSMQVAFFEC) match the Cx9C motif motif.

The protein belongs to the PET191 family.

Functionally, involved in an early step of the mitochondrial complex IV assembly process. This chain is Cytochrome c oxidase assembly factor 5 (coa5), found in Danio rerio (Zebrafish).